The sequence spans 470 residues: Angiopoietin-related protein 6 (470 aa).

Residues 1–20 form the signal peptide; sequence MGKPWLRALQLLLLLGASWA. N-linked (GlcNAc...) asparagine glycosylation is present at Asn58. Positions 59-116 form a coiled coil; it reads ASELAALRMRVGRHEELLRELQRLAAADGAVAGEVRALRKESRGLSARLGQLRAQLQH. N-linked (GlcNAc...) (complex) asparagine glycosylation occurs at Asn145. The segment at 214 to 249 is disordered; it reads SDTSRMLDPAPEPQRDQTQRQQEPMASPMPAGHPAV. Residues 251 to 469 form the Fibrinogen C-terminal domain; the sequence is TKPVGPWQDC…KAAMLIRPLK (219 aa). 2 disulfides stabilise this stretch: Cys260–Cys287 and Cys410–Cys423.

Its subcellular location is the secreted. Functionally, may play a role in the wound healing process. May promote epidermal proliferation, remodeling and regeneration. May promote the chemotactic activity of endothelial cells and induce neovascularization. May counteract high-fat diet-induced obesity and related insulin resistance through increased energy expenditure. The chain is Angiopoietin-related protein 6 (ANGPTL6) from Homo sapiens (Human).